The primary structure comprises 156 residues: Cyanate hydratase (156 aa).

Catalysis depends on residues R96, E99, and S122.

It belongs to the cyanase family.

It carries out the reaction cyanate + hydrogencarbonate + 3 H(+) = NH4(+) + 2 CO2. Functionally, catalyzes the reaction of cyanate with bicarbonate to produce ammonia and carbon dioxide. This is Cyanate hydratase from Escherichia coli (strain K12 / DH10B).